The following is a 940-amino-acid chain: MSDYKSTLNLPETEFPMRGNLANREPVMLKSWTEDGLYQQIRDSRIGRKPFILHDGPPYANGSIHIGHSVNKILKDIIVKSKTLSGFDAPYIPGWDCHGLPIELKVEQKVGKPGHKVTAAQFREKCREYAAKQVDGQREDFIRLGVFADWNKPYLTMDFDTEANIVRSLAKVIDSGHLHKGVKPVHWCTDCGSALAEAEVEYEDKKSPAIDVAFAATDKAALLAKFDVQDCTGSASMVIWTTTPWTLPANRALSVSPELDYVLVEFVKDGATSTVILADALVESCMERYGVESHKALGKAKGQELELLRFNHPFYDFDVPVILGDHVTVDSGTGVVHTAPGHGQDDFVVGQKYGLEVANPVGDNGVYKADTEIFAGQHVFKANDNVVALLEEKGALIKHEKIMHSYPHCWRHKTPIIFRATPQWFISMDQKGLRKQALGEIEQTQWIPDWGQSRIEKMVENRPDWCISRQRTWGVPITLFVHRETEELHPDSISLMERVANRIEREGIQAWWDLDAQELLGDEAEQYRKVTDTLDVWYDSGSSFSSVVASRPEYQGHEIDLYLEGSDQHRGWFMSSLMISTAMNGKAPYKQVLTHGFTVDGNGRKMSKSIGNVIAPQTVTNKLGADILRLWVAATDYSGEMTVSDEILKRSADAYRRIRNTARFLLANINGFDPVNDLVAVEEMVALDRWVVRRAAALQEELIEAYEQYNFHVVTQKLMQFCSVELGSFYLDIIKDRQYTAKGDSVARRSCQSALYLISEAMVRWIAPILSFTADEIWQLLPGEREKYVFTQEWYQGLESVTLDSDLSDEYWEQLLTVRGEVNKVIEQARREKQIGGSLEAEITLYADDALSQALATLGDELRFVLLTSKTQIVALSSAPADAIETEMTSLKLGLHKAESEKCERCWHHREDVGQVEAHPTLCTRCVTNIEGDGEVRQFA.

Residues 58–68 (PYANGSIHIGH) carry the 'HIGH' region motif. Glu-564 is an L-isoleucyl-5'-AMP binding site. The 'KMSKS' region signature appears at 605-609 (KMSKS). Lys-608 contacts ATP. 4 residues coordinate Zn(2+): Cys-903, Cys-906, Cys-923, and Cys-926.

The protein belongs to the class-I aminoacyl-tRNA synthetase family. IleS type 1 subfamily. In terms of assembly, monomer. Zn(2+) is required as a cofactor.

The protein localises to the cytoplasm. The enzyme catalyses tRNA(Ile) + L-isoleucine + ATP = L-isoleucyl-tRNA(Ile) + AMP + diphosphate. Catalyzes the attachment of isoleucine to tRNA(Ile). As IleRS can inadvertently accommodate and process structurally similar amino acids such as valine, to avoid such errors it has two additional distinct tRNA(Ile)-dependent editing activities. One activity is designated as 'pretransfer' editing and involves the hydrolysis of activated Val-AMP. The other activity is designated 'posttransfer' editing and involves deacylation of mischarged Val-tRNA(Ile). The chain is Isoleucine--tRNA ligase from Shewanella sediminis (strain HAW-EB3).